We begin with the raw amino-acid sequence, 1199 residues long: RNA-binding protein 20 (1199 aa).

Disordered regions lie at residues 1-55 (MVLA…PQAS), 163-186 (PSTAIAFSPPSQTGGPGPSVSLPS), and 320-346 (ERPPGFSGQNKPDITAGPSLWAPPASQ). The span at 25 to 42 (VMPGVQGPSVPQGQQGMQ) shows a compositional bias: low complexity. Over residues 43–52 (PLPPPPPPQP) the composition is skewed to pro residues. Residues 170 to 183 (SPPSQTGGPGPSVS) show a composition bias toward low complexity. The U1-type zinc-finger motif lies at 410-444 (HLPHICSICDKKVFDLKDWELHVKGKLHAQKCLLF). The RRM domain maps to 520–595 (RVVHICNLPE…EKLLIRMSTR (76 aa)). Over residues 626–636 (EADRYGPERPR) the composition is skewed to basic and acidic residues. Disordered stretches follow at residues 626 to 685 (EADR…NGED), 720 to 884 (REKY…YPTN), and 944 to 1077 (GETL…SQAC). The tract at residues 630–649 (YGPERPRSRSPMSRSLSPRS) is RS. 5 positions are modified to phosphoserine: serine 637, serine 639, serine 642, serine 644, and serine 651. Low complexity predominate over residues 638-649 (RSPMSRSLSPRS). A compositionally biased stretch (basic and acidic residues) spans 667-685 (YAWRDEDRETVPRRENGED). At serine 728 the chain carries Phosphoserine. Basic and acidic residues-rich tracts occupy residues 739–758 (KGREDGYHRKEPKAKLDKYP), 770–831 (RKEE…KESQ), and 859–868 (ENTRTKKGQD). Phosphoserine is present on serine 787. A phosphoserine mark is found at serine 871, serine 873, and serine 955. Polar residues predominate over residues 962–971 (VPSTSASCPN). A phosphoserine mark is found at serine 991, serine 1026, serine 1038, serine 1049, serine 1054, serine 1058, serine 1070, serine 1088, and serine 1093. Residues 1042–1055 (DDCKARGSPEDGSH) show a composition bias toward basic and acidic residues. Residues 1067-1077 (PTESDLQSQAC) are compositionally biased toward polar residues. Residues 1133–1164 (FYCKLCGLFYTSEEAAKVSHCRSTVHYRNLQK) form a Matrin-type zinc finger. Residues 1172–1199 (EGLKETEGTDSPSPERGGIGPHLERKKL) form a disordered region. Residues serine 1182 and serine 1184 each carry the phosphoserine modification.

Associates with components of the U1 and U2 U1 small nuclear ribonucleoprotein complexes. Post-translationally, phosphorylation regulates the subcellular localization. Phosphorylation of Ser-637 and Ser-639 in the RS (arginine/serine-rich) region promotes nuclear localization of the protein. In contrast, phosphorylation of the C-terminal disordered region promotes localization to cytoplasmic ribonucleoprotein granules. As to expression, predominantly expressed in striated muscle, with highest expression in the heart. In differentiating myoblasts, expression correlates with sarcomere assembly: expression peaks when alpha-actinin is localized mainly in mature Z bodies within the nascent myofiber and expression declines as the sarcomeres continue to mature. Also expressed in kidney.

It is found in the nucleus. The protein localises to the cytoplasm. Its subcellular location is the cytoplasmic ribonucleoprotein granule. Functionally, RNA-binding protein that acts as a regulator of mRNA splicing of a subset of genes encoding key structural proteins involved in cardiac development, such as TTN (Titin), CACNA1C, CAMK2D or PDLIM5/ENH. Acts as a repressor of mRNA splicing: specifically binds the 5'UCUU-3' motif that is predominantly found within intronic sequences of pre-mRNAs, leading to the exclusion of specific exons in target transcripts. RBM20-mediated exon skipping is hormone-dependent and is essential for TTN isoform transition in both cardiac and skeletal muscles. RBM20-mediated exon skipping of TTN provides substrates for the formation of circular RNA (circRNAs) from the TTN transcripts. Together with RBM24, promotes the expression of short isoforms of PDLIM5/ENH in cardiomyocytes. The chain is RNA-binding protein 20 from Mus musculus (Mouse).